A 51-amino-acid polypeptide reads, in one-letter code: UPF0337 protein NE0131 (51 aa).

The protein belongs to the UPF0337 (CsbD) family.

The chain is UPF0337 protein NE0131 from Nitrosomonas europaea (strain ATCC 19718 / CIP 103999 / KCTC 2705 / NBRC 14298).